Here is a 248-residue protein sequence, read N- to C-terminus: tRNA (guanine-N(1)-)-methyltransferase (248 aa).

Residues glycine 117 and 137–142 contribute to the S-adenosyl-L-methionine site; that span reads IGDFVL.

The protein belongs to the RNA methyltransferase TrmD family. As to quaternary structure, homodimer.

It localises to the cytoplasm. The catalysed reaction is guanosine(37) in tRNA + S-adenosyl-L-methionine = N(1)-methylguanosine(37) in tRNA + S-adenosyl-L-homocysteine + H(+). In terms of biological role, specifically methylates guanosine-37 in various tRNAs. The polypeptide is tRNA (guanine-N(1)-)-methyltransferase (Polynucleobacter necessarius subsp. necessarius (strain STIR1)).